Reading from the N-terminus, the 357-residue chain is MQLPEDATKRAPLALVSIILPVHNAEQWLDECLMSVLQQDFEGTMELSVFNDASKDKSRAIIEKWKVKLEDSGISVVIGGHDSPSPRGVGYSKNQAIAQSTGSYLCFLDSDDVMMPQRVRMQYEAAVQHPASIIGCQVRRDPPDSTERYTRWINQLTSDQLLTQVFTSHGPTVIMPTWFCSRAWFSHVGPFDEGGQGVPEDLLFFYEHLRKGGGVFRVDHSLLLYRYHLCAATHSVLEMTIWTHRVHFLEEQILPHWKSFTIWNAGKQGRKLYRSLTAASQHKVVAFCDIDKNKIRKGFYCHEDSQERPKPKVPILHFQAAQPPFVICVKLDLTGGEFEDNLKSLHLQEGRDFVHFS.

Belongs to the glycosyltransferase 2 family.

The protein resides in the cytoplasm. It catalyses the reaction queuosine(34) in tRNA(Tyr) + UDP-alpha-D-galactose = O-5''-beta-D-galactosylqueuosine(34) in tRNA(Tyr) + UDP + H(+). Its function is as follows. Glycosyltransferase that specifically catalyzes galactosylation of cytoplasmic tRNA(Tyr) modified with queuosine at position 34 (queuosine(34)). Galactosylates the cyclopentene hydroxyl group of queuosine(34) in tRNA(Tyr) to form galactosyl-queuosine(34). Mannosylation of queuosine(34) in tRNA(Tyr) is required to slow-down elongation at cognate codons UAC and suppress stop codon readthrough, thereby regulating protein translation. This Rattus norvegicus (Rat) protein is Queuosine-tRNA galactosyltransferase.